We begin with the raw amino-acid sequence, 545 residues long: Esterase-5C (545 aa).

The first 19 residues, 1 to 19 (MLAARLIILLSFYWLSASA), serve as a signal peptide directing secretion. Cys84 and Cys103 form a disulfide bridge. Residue Asn113 is glycosylated (N-linked (GlcNAc...) asparagine). The active-site Acyl-ester intermediate is the Ser207. Cysteines 259 and 271 form a disulfide. A glycan (N-linked (GlcNAc...) asparagine) is linked at Asn421. The active-site Charge relay system is His467. Asn507 is a glycosylation site (N-linked (GlcNAc...) asparagine). A disulfide bridge connects residues Cys515 and Cys536.

It belongs to the type-B carboxylesterase/lipase family.

Its subcellular location is the secreted. It carries out the reaction a carboxylic ester + H2O = an alcohol + a carboxylate + H(+). In Drosophila persimilis (Fruit fly), this protein is Esterase-5C (Est-5C).